Consider the following 180-residue polypeptide: Crossover junction endodeoxyribonuclease RuvC (180 aa).

Active-site residues include Asp-7, Glu-66, and Asp-138. 3 residues coordinate Mg(2+): Asp-7, Glu-66, and Asp-138.

This sequence belongs to the RuvC family. Homodimer which binds Holliday junction (HJ) DNA. The HJ becomes 2-fold symmetrical on binding to RuvC with unstacked arms; it has a different conformation from HJ DNA in complex with RuvA. In the full resolvosome a probable DNA-RuvA(4)-RuvB(12)-RuvC(2) complex forms which resolves the HJ. Requires Mg(2+) as cofactor.

The protein localises to the cytoplasm. The catalysed reaction is Endonucleolytic cleavage at a junction such as a reciprocal single-stranded crossover between two homologous DNA duplexes (Holliday junction).. Functionally, the RuvA-RuvB-RuvC complex processes Holliday junction (HJ) DNA during genetic recombination and DNA repair. Endonuclease that resolves HJ intermediates. Cleaves cruciform DNA by making single-stranded nicks across the HJ at symmetrical positions within the homologous arms, yielding a 5'-phosphate and a 3'-hydroxyl group; requires a central core of homology in the junction. The consensus cleavage sequence is 5'-(A/T)TT(C/G)-3'. Cleavage occurs on the 3'-side of the TT dinucleotide at the point of strand exchange. HJ branch migration catalyzed by RuvA-RuvB allows RuvC to scan DNA until it finds its consensus sequence, where it cleaves and resolves the cruciform DNA. In Burkholderia thailandensis (strain ATCC 700388 / DSM 13276 / CCUG 48851 / CIP 106301 / E264), this protein is Crossover junction endodeoxyribonuclease RuvC.